The following is a 102-amino-acid chain: NADH-quinone oxidoreductase subunit K (102 aa).

Helical transmembrane passes span 6–26 (LEHG…GLMV), 30–50 (ILFV…AFIV), and 62–82 (VMFI…LAIL).

Belongs to the complex I subunit 4L family. NDH-1 is composed of 13 different subunits. Subunits NuoA, H, J, K, L, M, N constitute the membrane sector of the complex.

It localises to the cell inner membrane. It catalyses the reaction a quinone + NADH + 5 H(+)(in) = a quinol + NAD(+) + 4 H(+)(out). Its function is as follows. NDH-1 shuttles electrons from NADH, via FMN and iron-sulfur (Fe-S) centers, to quinones in the respiratory chain. The immediate electron acceptor for the enzyme in this species is believed to be ubiquinone. Couples the redox reaction to proton translocation (for every two electrons transferred, four hydrogen ions are translocated across the cytoplasmic membrane), and thus conserves the redox energy in a proton gradient. In Pseudomonas fluorescens (strain SBW25), this protein is NADH-quinone oxidoreductase subunit K.